The following is a 211-amino-acid chain: Protein-methionine-sulfoxide reductase heme-binding subunit MsrQ (211 aa).

5 helical membrane passes run 10 to 30 (WLKV…AWAI), 82 to 102 (LWCF…ELGV), 116 to 136 (PYLT…FTST), 153 to 173 (FVYL…KIIS), and 178 to 198 (IYAG…LSLF).

This sequence belongs to the MsrQ family. As to quaternary structure, heterodimer of a catalytic subunit (MsrP) and a heme-binding subunit (MsrQ). Requires FMN as cofactor. The cofactor is heme b.

It is found in the cell inner membrane. Part of the MsrPQ system that repairs oxidized periplasmic proteins containing methionine sulfoxide residues (Met-O), using respiratory chain electrons. Thus protects these proteins from oxidative-stress damage caused by reactive species of oxygen and chlorine generated by the host defense mechanisms. MsrPQ is essential for the maintenance of envelope integrity under bleach stress, rescuing a wide series of structurally unrelated periplasmic proteins from methionine oxidation, including the primary periplasmic chaperone SurA and the lipoprotein Pal. MsrQ provides electrons for reduction to the reductase catalytic subunit MsrP, using the quinone pool of the respiratory chain. The polypeptide is Protein-methionine-sulfoxide reductase heme-binding subunit MsrQ (Escherichia coli (strain UTI89 / UPEC)).